A 372-amino-acid polypeptide reads, in one-letter code: MADS-box transcription factor pvg4 (372 aa).

In terms of domain architecture, MADS-box spans 1 to 61 (MGRKKISIAP…GRLHVFCSSD (61 aa)). The segment at 81–187 (SHFSSSPVEE…HPPHPHFHNN (107 aa)) is disordered. Low complexity predominate over residues 84-100 (SSSPVEESSTVSPETTT). Over residues 114 to 145 (QDQPLSDSQLDTGDSPATSETTVQDYNPQVQS) the composition is skewed to polar residues. Over residues 167 to 184 (QHHHPHTRPPHHPPHPHF) the composition is skewed to basic residues.

The protein localises to the nucleus. Acts in transcription regulation. May bind to a MEF2-like typee II promoter sequence. The polypeptide is MADS-box transcription factor pvg4 (pvg4) (Schizosaccharomyces pombe (strain 972 / ATCC 24843) (Fission yeast)).